The sequence spans 339 residues: MYVVIINIVLLKVLMVLTITILSGGFSRERKISLMSGKAVKKALDSLSYNAIEIDVNSNTAEKLKKINPDLAFIALHGPYGEDGCIQGLLEILGIKYTHSGVMASAIAMNKAMSKHIFRSLGIDTPKGYIISRGDILKNNIKIDYPYVLKPINEGSSIGVHITFSHEDYLKLKNMFSVIPVHDAGIEEEEPVWITRDLMIIEEYIPGIELHTAVLLDEAAGTMEIRPKNKFYDYKAKYTNGFAEHIFPAEIPDNIYEMTLEHALKVHRFLGCKTISRSDFRYNPKDNTLKMLEINTHPGFTELSLVPEIAKLTKGIDFNELVKIIIEDSLQHKKILEIK.

An ATP-grasp domain is found at 115–327; sequence KHIFRSLGID…FNELVKIIIE (213 aa). 142–211 contributes to the ATP binding site; the sequence is KIDYPYVLKP…EEYIPGIELH (70 aa). Mg(2+) is bound by residues Asp-279, Glu-293, and Asn-295.

Belongs to the D-alanine--D-alanine ligase family. Mg(2+) is required as a cofactor. It depends on Mn(2+) as a cofactor.

It localises to the cytoplasm. It catalyses the reaction 2 D-alanine + ATP = D-alanyl-D-alanine + ADP + phosphate + H(+). Its pathway is cell wall biogenesis; peptidoglycan biosynthesis. In terms of biological role, cell wall formation. This Wolbachia sp. subsp. Brugia malayi (strain TRS) protein is D-alanine--D-alanine ligase.